Here is a 562-residue protein sequence, read N- to C-terminus: MDIKRTILIVALAIVTYVGVLKWNQDYGQAAMPTQNVAASNTAPGIPDTAAGNNGSASADVPSATGNTTSAAPLETPAVASKDLIHVKTDVLDLAIDPVGGDVVQLRLPLYPRRQDRPDVPFQLFDNGGERTFLAQSGLTGTNGPDARASGRPVYSSAQKSYQLADGQDSMVVELKFSENGVNYIKRFTFKRGLYDLVMTYVVDNQSAQPWAGNLFAQLKRDASSDPSSTTATGTATYLGAALWTAAEPYKKVSMKDIDKGQIKENVQGGWVAWLQHYFVTAWIPDHNVTNAVQTRKDSQGNYIIGFTSPTLSVAPGAQGETTATLYAGPKSQAVLKELSPGLELTVDYGFLWFIAQPIFWLLQHIHAILGNWGWSIIVLTMLIKGLFFPLSAASYKSMARMRAVAPKLAVLKEQHGDDRQKMSQAMMELYKKEKINPLGGCLPILVQMPVFLSLYWVLLESVEMRQAPWILWITDLSIKDPFFILPIIMGATMFIQQRLNPTPPDPMQAKVMKMMPIIFTFFFLWFPAGLVLYWVVNNTLSIAQQAYITRKIGAATKKAAA.

Residues 1-21 (MDIKRTILIVALAIVTYVGVL) form a helical membrane-spanning segment. The tract at residues 42-74 (TAPGIPDTAAGNNGSASADVPSATGNTTSAAPL) is disordered. A run of 5 helical transmembrane segments spans residues 343–363 (LELT…FWLL), 369–389 (ILGN…GLFF), 439–459 (LGGC…YWVL), 470–490 (WILW…PIIM), and 517–537 (PIIF…YWVV).

It belongs to the OXA1/ALB3/YidC family. Type 1 subfamily. In terms of assembly, interacts with the Sec translocase complex via SecD. Specifically interacts with transmembrane segments of nascent integral membrane proteins during membrane integration.

The protein localises to the cell inner membrane. In terms of biological role, required for the insertion and/or proper folding and/or complex formation of integral membrane proteins into the membrane. Involved in integration of membrane proteins that insert both dependently and independently of the Sec translocase complex, as well as at least some lipoproteins. Aids folding of multispanning membrane proteins. This is Membrane protein insertase YidC from Pseudomonas syringae pv. tomato (strain ATCC BAA-871 / DC3000).